The primary structure comprises 149 residues: SsrA-binding protein (149 aa).

Belongs to the SmpB family.

It localises to the cytoplasm. Its function is as follows. Required for rescue of stalled ribosomes mediated by trans-translation. Binds to transfer-messenger RNA (tmRNA), required for stable association of tmRNA with ribosomes. tmRNA and SmpB together mimic tRNA shape, replacing the anticodon stem-loop with SmpB. tmRNA is encoded by the ssrA gene; the 2 termini fold to resemble tRNA(Ala) and it encodes a 'tag peptide', a short internal open reading frame. During trans-translation Ala-aminoacylated tmRNA acts like a tRNA, entering the A-site of stalled ribosomes, displacing the stalled mRNA. The ribosome then switches to translate the ORF on the tmRNA; the nascent peptide is terminated with the 'tag peptide' encoded by the tmRNA and targeted for degradation. The ribosome is freed to recommence translation, which seems to be the essential function of trans-translation. This Anaplasma marginale (strain Florida) protein is SsrA-binding protein.